The chain runs to 372 residues: L-selectin (372 aa).

A signal peptide spans 1 to 28; sequence MIFPRKCQSTQRDLWNIFKLWGWTMLCC. A propeptide spanning residues 29-38 is cleaved from the precursor; it reads DFLAHHGTDC. Residues 39–332 lie on the Extracellular side of the membrane; the sequence is WTYHYSENPM…FSMIKEGDYN (294 aa). The C-type lectin domain maps to 55-155; that stretch reads RFCRENYTDL…ACHKPKAALC (101 aa). Disulfide bonds link Cys-57/Cys-155, Cys-128/Cys-147, Cys-128/Cys-160, Cys-160/Cys-171, Cys-165/Cys-180, Cys-182/Cys-191, Cys-197/Cys-241, Cys-227/Cys-254, Cys-259/Cys-303, and Cys-289/Cys-316. 2 N-linked (GlcNAc...) asparagine glycosylation sites follow: Asn-60 and Asn-104. Residues Glu-118, Asn-120, Glu-126, Asn-143, and Asp-144 each coordinate Ca(2+). The 37-residue stretch at 156–192 folds into the EGF-like domain; the sequence is YTASCQPWSCSGHGECVEIINNYTCNCDVGYYGPQCQ. Residue Asn-177 is glycosylated (N-linked (GlcNAc...) asparagine). Sushi domains lie at 195–256 and 257–318; these read IQCE…TCQV and IQCE…ICQK. Asn-226, Asn-232, Asn-246, and Asn-271 each carry an N-linked (GlcNAc...) asparagine glycan. The helical transmembrane segment at 333-355 threads the bilayer; it reads PLFIPVAVMVTAFSGLAFIIWLA. Residues 356-372 are Cytoplasmic-facing; the sequence is RRLKKGKKSKKSMDDPY.

This sequence belongs to the selectin/LECAM family. Interaction with SELPLG/PSGL1 and PODXL2 is required for promoting recruitment and rolling of leukocytes. This interaction is dependent on the sialyl Lewis X glycan modification of SELPLG and PODXL2, and tyrosine sulfation modifications of SELPLG. Sulfation on 'Tyr-51' of SELPLG is important for L-selectin binding. In terms of processing, N-glycosylated.

It is found in the cell membrane. Functionally, calcium-dependent lectin that mediates cell adhesion by binding to glycoproteins on neighboring cells. Mediates the adherence of lymphocytes to endothelial cells of high endothelial venules in peripheral lymph nodes. Promotes initial tethering and rolling of leukocytes in endothelia. This is L-selectin (SELL) from Macaca mulatta (Rhesus macaque).